We begin with the raw amino-acid sequence, 440 residues long: Serine/threonine-protein kinase VRK1 (440 aa).

Residues 37–317 form the Protein kinase domain; sequence WKLGLPIGQG…LLEYTEKPLY (281 aa). Residues 43 to 51 and Lys-71 each bind ATP; that span reads IGQGGFGCI. Residue Lys-71 forms a Glycyl lysine isopeptide (Lys-Gly) (interchain with G-Cter in SUMO2) linkage. Asp-177 (proton acceptor) is an active-site residue. Ser-342 bears the Phosphoserine; by PLK3 mark. Position 376 is a phosphoserine (Ser-376). Thr-378 bears the Phosphothreonine mark. Polar residues-rich tracts occupy residues 379-391 and 398-410; these read QVQEAAQTRSVES and SMSQPAAGCSSSD. The segment at 379-440 is disordered; the sequence is QVQEAAQTRS…GSRTRKKAQK (62 aa). The interval 387 to 393 is required for interaction with the nucleosome; sequence RSVESQG.

Belongs to the protein kinase superfamily. CK1 Ser/Thr protein kinase family. VRK subfamily. Interacts with HDAC1, KAT2B, SETDB1, KDM3A and KDM4A. Associates with the nucleosome through interactions with nucleosome DNA, histone H2A and histone H2B; the interaction with H2A and H2B is mediated by the nucleosome acidic patch, a cluster of negatively charged residues of H2A and H2B forming a cleft within the nucleosome core. In terms of processing, autophosphorylated at various serine and threonine residues. Autophosphorylation does not impair its ability to phosphorylate p53/TP53. Phosphorylation by PLK3 leads to induction of Golgi fragmentation during mitosis. As to expression, highly expressed in testis. Expressed in liver, kidney and muscle. Weakly expressed in thymus, bone marrow and spleen.

It localises to the nucleus. The protein localises to the cytoplasm. Its subcellular location is the cajal body. It catalyses the reaction L-seryl-[protein] + ATP = O-phospho-L-seryl-[protein] + ADP + H(+). It carries out the reaction L-threonyl-[protein] + ATP = O-phospho-L-threonyl-[protein] + ADP + H(+). With respect to regulation, active in presence of Mn(2+), Mg(2+) and Zn(2+), but is not functional with Ca(2+) or Cu(2+). Has a higher affinity for Mn(2+) than for Mg(2+). RAN inhibits its autophosphorylation and its ability to phosphorylate histone H3. Serine/threonine kinase involved in the regulation of key cellular processes including the cell cycle, nuclear condensation, transcription regulation, and DNA damage response. Controls chromatin organization and remodeling by mediating phosphorylation of histone H3 on 'Thr-4' and histone H2AX (H2aXT4ph). It also phosphorylates KAT5 in response to DNA damage, promoting KAT5 association with chromatin and histone acetyltransferase activity. Is involved in the regulation of cell cycle progression of neural progenitors, and is required for proper cortical neuronal migration. Is involved in neurite elongation and branching in motor neurons, and has an essential role in Cajal bodies assembly, acting through COIL phosphorylation and the control of coilin degradation. Involved in Golgi disassembly during the cell cycle: following phosphorylation by PLK3 during mitosis, required to induce Golgi fragmentation. Phosphorylates BANF1: disrupts its ability to bind DNA, reduces its binding to LEM domain-containing proteins and causes its relocalization from the nucleus to the cytoplasm. Phosphorylates TP53BP1 and p53/TP53 on 'Thr-18', preventing the interaction between p53/TP53 and MDM2. Phosphorylates ATF2 which activates its transcriptional activity. Phosphorylates JUN. This is Serine/threonine-protein kinase VRK1 from Mus musculus (Mouse).